We begin with the raw amino-acid sequence, 70 residues long: Cold shock-like protein CspH (70 aa).

The CSD domain maps to 7-67 (GIVKTFDCKS…GLRGPTAANV (61 aa)).

The protein localises to the cytoplasm. The sequence is that of Cold shock-like protein CspH (cspH) from Salmonella typhi.